The following is a 160-amino-acid chain: Small ribosomal subunit protein uS17z (160 aa).

Belongs to the universal ribosomal protein uS17 family.

It is found in the cytoplasm. The polypeptide is Small ribosomal subunit protein uS17z (RPS11A) (Arabidopsis thaliana (Mouse-ear cress)).